We begin with the raw amino-acid sequence, 593 residues long: Metal-response element-binding transcription factor 2 (593 aa).

The tract at residues 1 to 35 is disordered; it reads MRDSTGAGNSLVHKRSPLRRNQKTPTSLTKLSLQD. The segment covering 12–22 has biased composition (basic residues); sequence VHKRSPLRRNQ. The segment covering 23-32 has biased composition (polar residues); that stretch reads KTPTSLTKLS. Residue Thr24 is modified to Phosphothreonine. The region spanning 44-101 is the Tudor domain; it reads CKFEEGQDVLARWSDGLFYLGTIKKINILKQSCFIIFEDSSKSWVLWKDIQTGATGSG. PHD-type zinc fingers lie at residues 102–157 and 201–255; these read EMVC…CVFA and QCYC…CSSG. A Glycyl lysine isopeptide (Lys-Gly) (interchain with G-Cter in SUMO2) cross-link involves residue Lys360. The span at 360–374 shows a compositional bias: basic and acidic residues; it reads KAEKEPEGTSHEFKI. 2 disordered regions span residues 360 to 411 and 424 to 486; these read KAEK…PYTR and KESI…TRTG. The segment covering 445-454 has biased composition (polar residues); the sequence is TAHSSNTSDV. Residue Ser452 is modified to Phosphoserine. Residues 459–471 are compositionally biased toward low complexity; it reads ASSAKETTSSSIS. Residue Lys522 forms a Glycyl lysine isopeptide (Lys-Gly) (interchain with G-Cter in SUMO2) linkage.

It belongs to the Polycomblike family. As to quaternary structure, associates with the PRC2 complex, which consists of the core components EED, EZH1 or EZH2, SUZ12, and RBBP4, and various combinations of accessory subunits including AEBP2, JARID2, PHF19, MTF2 and EPOP. Forms a dimeric PRC2.1 (class 1, PRC-PCL) complex consisting of at least SUZ12, RBBP4, and PHF19 or MTF2; PHF19 and MTF2 stabilize the dimeric structure which enhances PRC2 interaction with chromatin.

Its subcellular location is the nucleus. Polycomb group (PcG) protein that specifically binds histone H3 trimethylated at 'Lys-36' (H3K36me3) and recruits the PRC2 complex, thus enhancing PRC2 H3K27me3 methylation activity. Regulates the transcriptional networks during embryonic stem cell self-renewal and differentiation. Promotes recruitment of the PRC2 complex to the inactive X chromosome in differentiating XX ES cells and PRC2 recruitment to target genes in undifferentiated ES cells. Required to repress Hox genes by enhancing H3K27me3 methylation of the PRC2 complex. In some conditions may act as an inhibitor of PRC2 activity: able to activate the CDKN2A gene and promote cellular senescence by suppressing the catalytic activity of the PRC2 complex locally. Binds to the metal-regulating-element (MRE) of MT1A gene promoter. The protein is Metal-response element-binding transcription factor 2 (MTF2) of Homo sapiens (Human).